Reading from the N-terminus, the 133-residue chain is Small ribosomal subunit protein uS8 (133 aa).

This sequence belongs to the universal ribosomal protein uS8 family. Part of the 30S ribosomal subunit. Contacts proteins S5 and S12.

Functionally, one of the primary rRNA binding proteins, it binds directly to 16S rRNA central domain where it helps coordinate assembly of the platform of the 30S subunit. This is Small ribosomal subunit protein uS8 from Lachnoclostridium phytofermentans (strain ATCC 700394 / DSM 18823 / ISDg) (Clostridium phytofermentans).